A 169-amino-acid chain; its full sequence is Der GTPase-activating protein YihI (169 aa).

Disordered regions lie at residues 1–100 and 144–169; these read MKPS…AELE and GLSY…LRGN. The span at 10-19 shows a compositional bias: basic residues; it reads SKGHAKARRK. Positions 20–30 are enriched in basic and acidic residues; the sequence is TREELDQEARD. A compositionally biased stretch (basic residues) spans 31–40; that stretch reads RKRQKKRRGH. The segment covering 49–58 has biased composition (polar residues); it reads GNTSSGSKGQ. The segment covering 147 to 159 has biased composition (acidic residues); sequence YDDDEEEEEDEKQ. The span at 160 to 169 shows a compositional bias: basic and acidic residues; sequence EDMMRLLRGN.

The protein belongs to the YihI family. Interacts with Der.

A GTPase-activating protein (GAP) that modifies Der/EngA GTPase function. May play a role in ribosome biogenesis. The sequence is that of Der GTPase-activating protein YihI from Escherichia coli (strain SMS-3-5 / SECEC).